Consider the following 389-residue polypeptide: Succinate--CoA ligase [ADP-forming] subunit beta (389 aa).

The region spanning arginine 9–lysine 236 is the ATP-grasp domain. Residues lysine 45, glycine 52–glycine 54, alanine 94, and glutamate 99 each bind ATP. Asparagine 191 and aspartate 205 together coordinate Mg(2+). Substrate is bound by residues asparagine 256 and glycine 318–threonine 320.

The protein belongs to the succinate/malate CoA ligase beta subunit family. Heterotetramer of two alpha and two beta subunits. Mg(2+) is required as a cofactor.

It carries out the reaction succinate + ATP + CoA = succinyl-CoA + ADP + phosphate. The enzyme catalyses GTP + succinate + CoA = succinyl-CoA + GDP + phosphate. It participates in carbohydrate metabolism; tricarboxylic acid cycle; succinate from succinyl-CoA (ligase route): step 1/1. Functionally, succinyl-CoA synthetase functions in the citric acid cycle (TCA), coupling the hydrolysis of succinyl-CoA to the synthesis of either ATP or GTP and thus represents the only step of substrate-level phosphorylation in the TCA. The beta subunit provides nucleotide specificity of the enzyme and binds the substrate succinate, while the binding sites for coenzyme A and phosphate are found in the alpha subunit. The sequence is that of Succinate--CoA ligase [ADP-forming] subunit beta from Pseudarthrobacter chlorophenolicus (strain ATCC 700700 / DSM 12829 / CIP 107037 / JCM 12360 / KCTC 9906 / NCIMB 13794 / A6) (Arthrobacter chlorophenolicus).